Consider the following 113-residue polypeptide: UPF0122 protein LAF_1235 (113 aa).

The protein belongs to the UPF0122 family.

Functionally, might take part in the signal recognition particle (SRP) pathway. This is inferred from the conservation of its genetic proximity to ftsY/ffh. May be a regulatory protein. This Limosilactobacillus fermentum (strain NBRC 3956 / LMG 18251) (Lactobacillus fermentum) protein is UPF0122 protein LAF_1235.